The following is a 477-amino-acid chain: Proline--tRNA ligase (477 aa).

It belongs to the class-II aminoacyl-tRNA synthetase family. ProS type 3 subfamily. In terms of assembly, homodimer.

The protein resides in the cytoplasm. It catalyses the reaction tRNA(Pro) + L-proline + ATP = L-prolyl-tRNA(Pro) + AMP + diphosphate. Functionally, catalyzes the attachment of proline to tRNA(Pro) in a two-step reaction: proline is first activated by ATP to form Pro-AMP and then transferred to the acceptor end of tRNA(Pro). The sequence is that of Proline--tRNA ligase from Methanocorpusculum labreanum (strain ATCC 43576 / DSM 4855 / Z).